The primary structure comprises 905 residues: Transcription termination factor 1 (905 aa).

Composition is skewed to basic and acidic residues over residues 1 to 16 and 24 to 33; these read MEGESSRFEIHTPVSD and IHKERPQKHS. Positions 1 to 33 are disordered; the sequence is MEGESSRFEIHTPVSDKKKKKCSIHKERPQKHS. An N-terminal region (NRD) region spans residues 1–223; sequence MEGESSRFEI…AHKNKSKKKK (223 aa). A Phosphoserine modification is found at Ser-65. The segment at 151–443 is disordered; that stretch reads SHAHKSEALH…KSRPRQKKTQ (293 aa). Composition is skewed to basic residues over residues 163–174 and 215–226; these read VREKKNKKHQRK and HKNKSKKKKKKS. Position 240 is a phosphoserine (Ser-240). Thr-248 is subject to Phosphothreonine. Basic residues-rich tracts occupy residues 270 to 283, 330 to 339, and 385 to 401; these read THKKKSKKKKKKKS, NKSKKKKKKS, and TKKKSKKRKLTSVKRAR. Ser-403 is modified (phosphoserine). Residues 410 to 419 show a composition bias toward polar residues; sequence PSKNSESTLF. Position 476 is a phosphotyrosine (Tyr-476). Phosphoserine occurs at positions 478, 481, and 487. Residues 498 to 886 are may be involved in interaction with ARF; sequence LQEFIPNIKD…IEKESEGQAP (389 aa). Myb-like domains follow at residues 612–661 and 661–745; these read DVNN…SQIS and SSQR…TEIL. Lys-700 is covalently cross-linked (Glycyl lysine isopeptide (Lys-Gly) (interchain with G-Cter in SUMO2)). At Ser-872 the chain carries Phosphoserine.

In terms of assembly, oligomer. The oligomeric structure enables to interact simultaneously with two separate DNA fragments. Interacts with BAZ2A/TIP5. Interacts with CAVIN1. Interacts (via the N-terminal region (NRD) and a C-terminal region) with CDKN2A/ARF; the interaction is direct. Interacts (via C-terminal region) with NPM1/B23.

The protein localises to the nucleus. Its subcellular location is the nucleolus. It is found in the nucleoplasm. Its function is as follows. Multifunctional nucleolar protein that terminates ribosomal gene transcription, mediates replication fork arrest and regulates RNA polymerase I transcription on chromatin. Plays a dual role in rDNA regulation, being involved in both activation and silencing of rDNA transcription. Interaction with BAZ2A/TIP5 recovers DNA-binding activity. The polypeptide is Transcription termination factor 1 (TTF1) (Homo sapiens (Human)).